We begin with the raw amino-acid sequence, 458 residues long: UDP-N-acetylmuramoylalanine--D-glutamate ligase (458 aa).

124 to 130 (GSDGKTT) provides a ligand contact to ATP.

This sequence belongs to the MurCDEF family.

The protein resides in the cytoplasm. It catalyses the reaction UDP-N-acetyl-alpha-D-muramoyl-L-alanine + D-glutamate + ATP = UDP-N-acetyl-alpha-D-muramoyl-L-alanyl-D-glutamate + ADP + phosphate + H(+). Its pathway is cell wall biogenesis; peptidoglycan biosynthesis. Its function is as follows. Cell wall formation. Catalyzes the addition of glutamate to the nucleotide precursor UDP-N-acetylmuramoyl-L-alanine (UMA). In Clostridium botulinum (strain Loch Maree / Type A3), this protein is UDP-N-acetylmuramoylalanine--D-glutamate ligase.